A 404-amino-acid polypeptide reads, in one-letter code: Putative glutamate--cysteine ligase 2 (404 aa).

The tract at residues 377-404 is disordered; sequence GPAGKRAHEGGRSFRPAAGAPMSIRGQE.

Belongs to the glutamate--cysteine ligase type 2 family. YbdK subfamily.

The enzyme catalyses L-cysteine + L-glutamate + ATP = gamma-L-glutamyl-L-cysteine + ADP + phosphate + H(+). Its function is as follows. ATP-dependent carboxylate-amine ligase which exhibits weak glutamate--cysteine ligase activity. The polypeptide is Putative glutamate--cysteine ligase 2 (Pseudomonas aeruginosa (strain UCBPP-PA14)).